An 842-amino-acid chain; its full sequence is Glucans biosynthesis glucosyltransferase H (842 aa).

Transmembrane regions (helical) follow at residues 140-160, 194-214, 513-533, 570-590, 615-635, 656-676, and 680-700; these read ILLL…KTIL, ILIL…TALM, VFLT…FLAL, LFAS…MLIW, VLLA…AFLG, FMRH…MAWL, and FLFW…VSVV.

The protein belongs to the glycosyltransferase 2 family. OpgH subfamily.

It is found in the cell inner membrane. Its pathway is glycan metabolism; osmoregulated periplasmic glucan (OPG) biosynthesis. Involved in the biosynthesis of osmoregulated periplasmic glucans (OPGs). The sequence is that of Glucans biosynthesis glucosyltransferase H from Citrobacter koseri (strain ATCC BAA-895 / CDC 4225-83 / SGSC4696).